Reading from the N-terminus, the 116-residue chain is FK506-binding protein 1 (116 aa).

The PPIase FKBP-type domain occupies 19–116; that stretch reads GDKVSIHYTG…IFEVELLKIN (98 aa).

This sequence belongs to the FKBP-type PPIase family. FKBP1 subfamily.

The protein localises to the cytoplasm. It catalyses the reaction [protein]-peptidylproline (omega=180) = [protein]-peptidylproline (omega=0). With respect to regulation, inhibited by both FK506 and rapamycin. Functionally, PPIases accelerate the folding of proteins. It catalyzes the cis-trans isomerization of proline imidic peptide bonds in oligopeptides. This chain is FK506-binding protein 1 (fpr1), found in Aspergillus oryzae (strain ATCC 42149 / RIB 40) (Yellow koji mold).